The following is a 170-amino-acid chain: Large ribosomal subunit protein uL11 (170 aa).

It belongs to the universal ribosomal protein uL11 family. As to quaternary structure, part of the ribosomal stalk of the 50S ribosomal subunit. Interacts with L10 and the large rRNA to form the base of the stalk. L10 forms an elongated spine to which L12 dimers bind in a sequential fashion forming a multimeric L10(L12)X complex.

Its function is as follows. Forms part of the ribosomal stalk which helps the ribosome interact with GTP-bound translation factors. This Saccharolobus solfataricus (strain ATCC 35092 / DSM 1617 / JCM 11322 / P2) (Sulfolobus solfataricus) protein is Large ribosomal subunit protein uL11.